The following is a 127-amino-acid chain: MSYRKLGRTSSQRKALLRDLTTELIVNEKIVTTEARAKEVRSTTEKMITLGKRGDLHARRQAAAFVRNVVADVTEDGEDVKVSSALQKLFADLAPRYADRKGGYTRIYKTMPRRGDGAPMVVLELVD.

The protein belongs to the bacterial ribosomal protein bL17 family. As to quaternary structure, part of the 50S ribosomal subunit. Contacts protein L32.

The polypeptide is Large ribosomal subunit protein bL17 (Pediococcus pentosaceus (strain ATCC 25745 / CCUG 21536 / LMG 10740 / 183-1w)).